The sequence spans 213 residues: MASFATHLVVVVTMLFVAMASAEMLQDVCVADLSNAVKVNGYTCKDSTQITPEDFYFKGLANIAATNTSTGSVVTGANVEKLPGLNTLGLSMSRIDYAPNGLNPPHVHPRASEIIFVLEGQLYVGFVTTAGKLIAKNLNKGDVFTFPKGLIHFQKNIANSPASVLAAFDSQLPGTQSLVASLFGALPDDILAKSFQLKHKQVKKIKLRYAPKK.

A signal peptide spans M1 to A22. C29 and C44 are disulfide-bonded. A Cupin type-1 domain is found at K58 to K203. An N-linked (GlcNAc...) asparagine glycan is attached at N67. 4 residues coordinate Mn(2+): H106, H108, E113, and H152.

This sequence belongs to the germin family. Oligomer (believed to be a pentamer but probably hexamer).

It is found in the secreted. It localises to the extracellular space. The protein resides in the apoplast. Functionally, may play a role in plant defense. Probably has no oxalate oxidase activity even if the active site is conserved. This Arabidopsis thaliana (Mouse-ear cress) protein is Probable germin-like protein subfamily 2 member 5.